The chain runs to 774 residues: RNA exonuclease 5 (774 aa).

Residues 1-19 (MEPEREGTERHPRKVRESR) are compositionally biased toward basic and acidic residues. A disordered region spans residues 1 to 22 (MEPEREGTERHPRKVRESRQAP). An Exonuclease domain is found at 228–376 (LFGLDCEMCL…EDARTILELA (149 aa)). RRM domains are found at residues 505 to 579 (STVY…RPVT) and 600 to 679 (GSIY…RHLH).

The chain is RNA exonuclease 5 from Homo sapiens (Human).